The primary structure comprises 465 residues: Cysteine--tRNA ligase (465 aa).

Cys-27 contributes to the Zn(2+) binding site. The short motif at 29–39 is the 'HIGH' region element; the sequence is PTVYDDAHLGH. Residues Cys-207, His-237, and Glu-241 each contribute to the Zn(2+) site. A 'KMSKS' region motif is present at residues 269 to 273; sequence KMSKS. Lys-272 contacts ATP.

This sequence belongs to the class-I aminoacyl-tRNA synthetase family. In terms of assembly, monomer. The cofactor is Zn(2+).

Its subcellular location is the cytoplasm. The catalysed reaction is tRNA(Cys) + L-cysteine + ATP = L-cysteinyl-tRNA(Cys) + AMP + diphosphate. The polypeptide is Cysteine--tRNA ligase (Helicobacter pylori (strain HPAG1)).